A 394-amino-acid polypeptide reads, in one-letter code: 1-deoxy-D-xylulose 5-phosphate reductoisomerase (394 aa).

Residues threonine 28, glycine 29, serine 30, isoleucine 31, asparagine 57, and asparagine 133 each contribute to the NADPH site. Residue lysine 134 participates in 1-deoxy-D-xylulose 5-phosphate binding. Glutamate 135 serves as a coordination point for NADPH. A Mn(2+)-binding site is contributed by aspartate 157. 1-deoxy-D-xylulose 5-phosphate contacts are provided by serine 158, glutamate 159, serine 183, and histidine 206. Glutamate 159 provides a ligand contact to Mn(2+). Position 212 (glycine 212) interacts with NADPH. Residues serine 219, asparagine 224, lysine 225, and glutamate 228 each coordinate 1-deoxy-D-xylulose 5-phosphate. Glutamate 228 lines the Mn(2+) pocket.

The protein belongs to the DXR family. The cofactor is Mg(2+). Mn(2+) is required as a cofactor.

The enzyme catalyses 2-C-methyl-D-erythritol 4-phosphate + NADP(+) = 1-deoxy-D-xylulose 5-phosphate + NADPH + H(+). It participates in isoprenoid biosynthesis; isopentenyl diphosphate biosynthesis via DXP pathway; isopentenyl diphosphate from 1-deoxy-D-xylulose 5-phosphate: step 1/6. Catalyzes the NADPH-dependent rearrangement and reduction of 1-deoxy-D-xylulose-5-phosphate (DXP) to 2-C-methyl-D-erythritol 4-phosphate (MEP). The chain is 1-deoxy-D-xylulose 5-phosphate reductoisomerase from Nocardia farcinica (strain IFM 10152).